The sequence spans 331 residues: D-alanine--D-alanine ligase (331 aa).

One can recognise an ATP-grasp domain in the interval 122-328; sequence KLWYDAIGIP…FHEFLADCIE (207 aa). 152-207 is an ATP binding site; the sequence is AFDKWGKLFVKAARQGSSVGCYSVTKIEQLSDAIDKAFGFSHQVLVEKAVKPRELE. Mg(2+)-binding residues include D282, E295, and N297.

Belongs to the D-alanine--D-alanine ligase family. Mg(2+) is required as a cofactor. The cofactor is Mn(2+).

It localises to the cytoplasm. It carries out the reaction 2 D-alanine + ATP = D-alanyl-D-alanine + ADP + phosphate + H(+). Its pathway is cell wall biogenesis; peptidoglycan biosynthesis. Cell wall formation. This Vibrio vulnificus (strain CMCP6) protein is D-alanine--D-alanine ligase.